A 441-amino-acid chain; its full sequence is Probable pyridine nucleotide-disulfide oxidoreductase RclA (441 aa).

33 to 43 is an FAD binding site; sequence EQSNAMYGGTC. A disulfide bridge connects residues Cys43 and Cys48. His426 acts as the Proton acceptor in catalysis.

It belongs to the class-I pyridine nucleotide-disulfide oxidoreductase family. FAD serves as cofactor.

Functionally, probably involved in reactive chlorine species (RCS) stress resistance. The protein is Probable pyridine nucleotide-disulfide oxidoreductase RclA (rclA) of Escherichia coli (strain K12).